Consider the following 459-residue polypeptide: Bifunctional protein GlmU (459 aa).

Positions 1-230 (MSNRFAVILA…FDETLGVNDR (230 aa)) are pyrophosphorylase. Residues 9–12 (LAAG), lysine 23, glutamine 73, and 78–79 (GT) contribute to the UDP-N-acetyl-alpha-D-glucosamine site. Aspartate 103 is a Mg(2+) binding site. 4 residues coordinate UDP-N-acetyl-alpha-D-glucosamine: glycine 140, glutamate 155, asparagine 170, and asparagine 228. Asparagine 228 lines the Mg(2+) pocket. The linker stretch occupies residues 231–251 (VALSQAEIIMKNRINRKNMVN). The interval 252–459 (GVTIIDPSNT…VDQLLNKKKS (208 aa)) is N-acetyltransferase. 2 residues coordinate UDP-N-acetyl-alpha-D-glucosamine: arginine 333 and lysine 351. Histidine 363 serves as the catalytic Proton acceptor. UDP-N-acetyl-alpha-D-glucosamine-binding residues include tyrosine 366 and asparagine 377. Acetyl-CoA contacts are provided by residues 386–387 (NY), alanine 423, and arginine 440.

In the N-terminal section; belongs to the N-acetylglucosamine-1-phosphate uridyltransferase family. It in the C-terminal section; belongs to the transferase hexapeptide repeat family. As to quaternary structure, homotrimer. The cofactor is Mg(2+).

It localises to the cytoplasm. The enzyme catalyses alpha-D-glucosamine 1-phosphate + acetyl-CoA = N-acetyl-alpha-D-glucosamine 1-phosphate + CoA + H(+). The catalysed reaction is N-acetyl-alpha-D-glucosamine 1-phosphate + UTP + H(+) = UDP-N-acetyl-alpha-D-glucosamine + diphosphate. Its pathway is nucleotide-sugar biosynthesis; UDP-N-acetyl-alpha-D-glucosamine biosynthesis; N-acetyl-alpha-D-glucosamine 1-phosphate from alpha-D-glucosamine 6-phosphate (route II): step 2/2. It participates in nucleotide-sugar biosynthesis; UDP-N-acetyl-alpha-D-glucosamine biosynthesis; UDP-N-acetyl-alpha-D-glucosamine from N-acetyl-alpha-D-glucosamine 1-phosphate: step 1/1. The protein operates within bacterial outer membrane biogenesis; LPS lipid A biosynthesis. Catalyzes the last two sequential reactions in the de novo biosynthetic pathway for UDP-N-acetylglucosamine (UDP-GlcNAc). The C-terminal domain catalyzes the transfer of acetyl group from acetyl coenzyme A to glucosamine-1-phosphate (GlcN-1-P) to produce N-acetylglucosamine-1-phosphate (GlcNAc-1-P), which is converted into UDP-GlcNAc by the transfer of uridine 5-monophosphate (from uridine 5-triphosphate), a reaction catalyzed by the N-terminal domain. This is Bifunctional protein GlmU from Bacillus cereus (strain AH187).